We begin with the raw amino-acid sequence, 247 residues long: Adenosylcobinamide-GDP ribazoletransferase (247 aa).

5 helical membrane-spanning segments follow: residues 34–54, 59–79, 113–133, 138–158, and 194–214; these read IVMF…IFIL, CGIP…TGGF, GGLA…ELAL, MLAA…LLMY, and VLLL…AIFI.

Belongs to the CobS family. Mg(2+) is required as a cofactor.

It is found in the cell inner membrane. It carries out the reaction alpha-ribazole + adenosylcob(III)inamide-GDP = adenosylcob(III)alamin + GMP + H(+). It catalyses the reaction alpha-ribazole 5'-phosphate + adenosylcob(III)inamide-GDP = adenosylcob(III)alamin 5'-phosphate + GMP + H(+). It functions in the pathway cofactor biosynthesis; adenosylcobalamin biosynthesis; adenosylcobalamin from cob(II)yrinate a,c-diamide: step 7/7. Joins adenosylcobinamide-GDP and alpha-ribazole to generate adenosylcobalamin (Ado-cobalamin). Also synthesizes adenosylcobalamin 5'-phosphate from adenosylcobinamide-GDP and alpha-ribazole 5'-phosphate. The polypeptide is Adenosylcobinamide-GDP ribazoletransferase (Salmonella typhi).